The following is a 577-amino-acid chain: Endopolyphosphatase (577 aa).

Topologically, residues 1 to 2 (MR) are cytoplasmic. A helical; Signal-anchor for type II membrane protein transmembrane segment spans residues 3–23 (PSVITVAVLFVQSTWASFAFG). At 24–577 (NPMSMRNKAH…YIGSISDFED (554 aa)) the chain is on the vacuolar side. Residues asparagine 363, asparagine 370, asparagine 375, and asparagine 399 are each glycosylated (N-linked (GlcNAc...) asparagine). The tract at residues 430 to 460 (SDYEIDKKKKKKKKNNKKKKKNKRKNIKPGP) is disordered. Residues 437–456 (KKKKKKKNNKKKKKNKRKNI) are compositionally biased toward basic residues. Asparagine 481 carries N-linked (GlcNAc...) asparagine glycosylation.

Belongs to the endopolyphosphatase PPN1 family. A divalent metal cation is required as a cofactor. Processing by proteases in the vacuole may be required for activation.

The protein resides in the vacuole membrane. The catalysed reaction is [phosphate](n+1) + n H2O = (n+1) phosphate + n H(+). In terms of biological role, catalyzes the hydrolysis of inorganic polyphosphate (polyP) chains of many hundreds of phosphate residues into shorter lengths. The polypeptide is Endopolyphosphatase (ppn1) (Schizosaccharomyces pombe (strain 972 / ATCC 24843) (Fission yeast)).